The sequence spans 255 residues: 3-deoxy-manno-octulosonate cytidylyltransferase (255 aa).

It belongs to the KdsB family.

Its subcellular location is the cytoplasm. It catalyses the reaction 3-deoxy-alpha-D-manno-oct-2-ulosonate + CTP = CMP-3-deoxy-beta-D-manno-octulosonate + diphosphate. It functions in the pathway nucleotide-sugar biosynthesis; CMP-3-deoxy-D-manno-octulosonate biosynthesis; CMP-3-deoxy-D-manno-octulosonate from 3-deoxy-D-manno-octulosonate and CTP: step 1/1. The protein operates within bacterial outer membrane biogenesis; lipopolysaccharide biosynthesis. Functionally, activates KDO (a required 8-carbon sugar) for incorporation into bacterial lipopolysaccharide in Gram-negative bacteria. This Pelobacter propionicus (strain DSM 2379 / NBRC 103807 / OttBd1) protein is 3-deoxy-manno-octulosonate cytidylyltransferase.